The primary structure comprises 136 residues: Large ribosomal subunit protein uL16c (136 aa).

It belongs to the universal ribosomal protein uL16 family. In terms of assembly, part of the 50S ribosomal subunit.

The protein resides in the plastid. It is found in the chloroplast. This Citrus sinensis (Sweet orange) protein is Large ribosomal subunit protein uL16c.